A 428-amino-acid chain; its full sequence is Enolase (428 aa).

Gln163 is a (2R)-2-phosphoglycerate binding site. Glu205 serves as the catalytic Proton donor. 3 residues coordinate Mg(2+): Asp242, Glu285, and Asp312. 4 residues coordinate (2R)-2-phosphoglycerate: Lys337, Arg366, Ser367, and Lys388. Lys337 serves as the catalytic Proton acceptor.

It belongs to the enolase family. The cofactor is Mg(2+).

Its subcellular location is the cytoplasm. The protein localises to the secreted. It is found in the cell surface. The enzyme catalyses (2R)-2-phosphoglycerate = phosphoenolpyruvate + H2O. Its pathway is carbohydrate degradation; glycolysis; pyruvate from D-glyceraldehyde 3-phosphate: step 4/5. Its function is as follows. Catalyzes the reversible conversion of 2-phosphoglycerate (2-PG) into phosphoenolpyruvate (PEP). It is essential for the degradation of carbohydrates via glycolysis. In Neisseria meningitidis serogroup C (strain 053442), this protein is Enolase.